Reading from the N-terminus, the 371-residue chain is tRNA-specific 2-thiouridylase MnmA (371 aa).

Residues 7-14 (GLSGGVDS) and Met33 contribute to the ATP site. Residues 103-105 (NPD) form an interaction with target base in tRNA region. Catalysis depends on Cys108, which acts as the Nucleophile. Cys108 and Cys201 are oxidised to a cystine. Gly133 contributes to the ATP binding site. The segment at 151–153 (KDQ) is interaction with tRNA. Cys201 serves as the catalytic Cysteine persulfide intermediate. The interaction with tRNA stretch occupies residues 308–309 (RY).

This sequence belongs to the MnmA/TRMU family.

Its subcellular location is the cytoplasm. The enzyme catalyses S-sulfanyl-L-cysteinyl-[protein] + uridine(34) in tRNA + AH2 + ATP = 2-thiouridine(34) in tRNA + L-cysteinyl-[protein] + A + AMP + diphosphate + H(+). Catalyzes the 2-thiolation of uridine at the wobble position (U34) of tRNA, leading to the formation of s(2)U34. The protein is tRNA-specific 2-thiouridylase MnmA of Mycoplasmopsis pulmonis (strain UAB CTIP) (Mycoplasma pulmonis).